The following is a 1013-amino-acid chain: Ephrin type-A receptor 5 (1013 aa).

Residues 1–31 (MGLRGGGGRAGGPAPGWTCLLLCAALRSLLA) form the signal peptide. Residues 32–549 (SPGSEVNLLD…AASSDQSQIP (518 aa)) lie on the Extracellular side of the membrane. Residues 36–214 (EVNLLDSRTV…YYKKCPSVIR (179 aa)) form the Eph LBD domain. N-linked (GlcNAc...) asparagine glycans are attached at residues N240, N275, N345, N399, N412, and N437. Fibronectin type-III domains lie at 333-443 (PPSA…TNQA) and 444-538 (APSP…TSPV). The helical transmembrane segment at 550–570 (IIVVSVTVGVILLAVVIGFLL) threads the bilayer. Residues 571–1013 (SGSCCDHGCG…VQLVNGMVPL (443 aa)) are Cytoplasmic-facing. 2 positions are modified to phosphotyrosine; by autocatalysis: Y626 and Y632. A Protein kinase domain is found at 651-912 (ITIERVIGAG…EIVSMLDKLI (262 aa)). Residues 657 to 665 (IGAGEFGEV) and K683 each bind ATP. D776 (proton acceptor) is an active-site residue. 2 positions are modified to phosphotyrosine; by autocatalysis: Y809 and Y958. One can recognise an SAM domain in the interval 941-1013 (GAYRSVGEWL…VQLVNGMVPL (73 aa)). The PDZ-binding motif lies at 1011–1013 (VPL).

This sequence belongs to the protein kinase superfamily. Tyr protein kinase family. Ephrin receptor subfamily. In terms of assembly, heterotetramer upon binding of the ligand. The heterotetramer is composed of an ephrin dimer and a receptor dimer. Oligomerization is probably required to induce biological responses. Phosphorylated. Phosphorylation is stimulated by the ligand EFNA5. As to expression, detected in the 10-day embryonic brain, weaker expression in the rest of the 10-day embryo. Undetected in adult tissues.

It is found in the cell membrane. The protein localises to the cell projection. The protein resides in the axon. Its subcellular location is the dendrite. It carries out the reaction L-tyrosyl-[protein] + ATP = O-phospho-L-tyrosyl-[protein] + ADP + H(+). In terms of biological role, receptor tyrosine kinase which binds promiscuously GPI-anchored ephrin-A family ligands residing on adjacent cells, leading to contact-dependent bidirectional signaling into neighboring cells. The signaling pathway downstream of the receptor is referred to as forward signaling while the signaling pathway downstream of the ephrin ligand is referred to as reverse signaling. Among GPI-anchored ephrin-A ligands, EFNA5 most probably constitutes the cognate/functional ligand for EPHA5. Functions as an axon guidance molecule during development and may be involved in the development of the retinotectal, entorhino-hippocampal and hippocamposeptal pathways. Together with EFNA5 plays also a role in synaptic plasticity in adult brain through regulation of synaptogenesis. This is Ephrin type-A receptor 5 (EPHA5) from Gallus gallus (Chicken).